The sequence spans 493 residues: Alcohol-forming fatty acyl-CoA reductase (493 aa).

It belongs to the fatty acyl-CoA reductase family.

It catalyses the reaction a long-chain fatty acyl-CoA + 2 NADPH + 2 H(+) = a long-chain primary fatty alcohol + 2 NADP(+) + CoA. Functionally, NADPH-dependent alcohol-forming fatty acyl-coenzyme A reductase that catalyzes the reduction of fatty acyl-CoA to fatty alcohols. The recombinant enzyme accepts saturated and mono-unsaturated fatty acyl-CoAs of 16 to 22 carbons. This chain is Alcohol-forming fatty acyl-CoA reductase, found in Simmondsia chinensis (Jojoba).